Here is a 224-residue protein sequence, read N- to C-terminus: Cytidylate kinase (224 aa).

ATP is bound at residue 10–18; that stretch reads GPASAGKST.

The protein belongs to the cytidylate kinase family. Type 1 subfamily.

The protein resides in the cytoplasm. The enzyme catalyses CMP + ATP = CDP + ADP. The catalysed reaction is dCMP + ATP = dCDP + ADP. The protein is Cytidylate kinase of Leuconostoc mesenteroides subsp. mesenteroides (strain ATCC 8293 / DSM 20343 / BCRC 11652 / CCM 1803 / JCM 6124 / NCDO 523 / NBRC 100496 / NCIMB 8023 / NCTC 12954 / NRRL B-1118 / 37Y).